The sequence spans 64 residues: Large ribosomal subunit protein bL35 (64 aa).

This sequence belongs to the bacterial ribosomal protein bL35 family.

In Shewanella halifaxensis (strain HAW-EB4), this protein is Large ribosomal subunit protein bL35.